Here is a 121-residue protein sequence, read N- to C-terminus: Prefoldin subunit beta (121 aa).

This sequence belongs to the prefoldin subunit beta family. Heterohexamer of two alpha and four beta subunits.

Its subcellular location is the cytoplasm. In terms of biological role, molecular chaperone capable of stabilizing a range of proteins. Seems to fulfill an ATP-independent, HSP70-like function in archaeal de novo protein folding. The sequence is that of Prefoldin subunit beta from Methanoculleus marisnigri (strain ATCC 35101 / DSM 1498 / JR1).